Reading from the N-terminus, the 171-residue chain is Large ribosomal subunit protein uL10 (171 aa).

This sequence belongs to the universal ribosomal protein uL10 family. In terms of assembly, part of the ribosomal stalk of the 50S ribosomal subunit. The N-terminus interacts with L11 and the large rRNA to form the base of the stalk. The C-terminus forms an elongated spine to which L12 dimers bind in a sequential fashion forming a multimeric L10(L12)X complex.

Functionally, forms part of the ribosomal stalk, playing a central role in the interaction of the ribosome with GTP-bound translation factors. This is Large ribosomal subunit protein uL10 from Cereibacter sphaeroides (strain ATCC 17023 / DSM 158 / JCM 6121 / CCUG 31486 / LMG 2827 / NBRC 12203 / NCIMB 8253 / ATH 2.4.1.) (Rhodobacter sphaeroides).